Consider the following 238-residue polypeptide: MSHKLTILPFLIKFTPKFPQSIDHDEHGLNVYAFDLDHTIIKPKSPNISFSRSASDWQFINFNSKKSTLDYLCNIIDNDPTAVIVIFSNQGGVITVPRTSKSCTKYTNKILLFLKAIKNDERGETLSHRLWLYAAPKRPKTFAANHSKITFASLGESYNNDPNIFEKVRKPMTGMVEFFKRDLESAYRVSEQISPIKLNWIYYCGDAAGRKKDFSDSDIKFAENLHVEFKYPEEIFHG.

The protein belongs to the DNA 3' phosphatase family.

It localises to the nucleus. The catalysed reaction is a 3'end (2'-deoxyribonucleotide 3'-phosphate)-DNA + H2O = a 3'-end 2'-deoxyribonucleotide-DNA + phosphate. Its function is as follows. Dephosphorylate DNA's 3'-phosphate termini. Has a role in the repair of breaks in single-stranded DNA. The sequence is that of Polynucleotide 3'-phosphatase (TPP1) from Saccharomyces cerevisiae (strain ATCC 204508 / S288c) (Baker's yeast).